A 347-amino-acid polypeptide reads, in one-letter code: Spermidine/putrescine import ATP-binding protein PotA (347 aa).

One can recognise an ABC transporter domain in the interval 6-238 (LEIRNLSHYY…PKTKFVADFI (233 aa)). An ATP-binding site is contributed by 40–47 (GPSGCGKT).

This sequence belongs to the ABC transporter superfamily. Spermidine/putrescine importer (TC 3.A.1.11.1) family. As to quaternary structure, the complex is composed of two ATP-binding proteins (PotA), two transmembrane proteins (PotB and PotC) and a solute-binding protein (PotD).

Its subcellular location is the cell inner membrane. The catalysed reaction is ATP + H2O + polyamine-[polyamine-binding protein]Side 1 = ADP + phosphate + polyamineSide 2 + [polyamine-binding protein]Side 1.. Functionally, part of the ABC transporter complex PotABCD involved in spermidine/putrescine import. Responsible for energy coupling to the transport system. This chain is Spermidine/putrescine import ATP-binding protein PotA, found in Borrelia garinii subsp. bavariensis (strain ATCC BAA-2496 / DSM 23469 / PBi) (Borreliella bavariensis).